Reading from the N-terminus, the 333-residue chain is Putative pectinesterase 14 (333 aa).

The first 16 residues, 1–16, serve as a signal peptide directing secretion; the sequence is MLFFILFLSIISPIES. Asparagine 108 and asparagine 114 each carry an N-linked (GlcNAc...) asparagine glycan. Position 116 (threonine 116) interacts with substrate. N-linked (GlcNAc...) asparagine glycosylation is present at asparagine 133. A substrate-binding site is contributed by glutamine 151. The active-site Proton donor is the aspartate 174. The active-site Nucleophile is aspartate 195. Substrate is bound at residue arginine 253. Asparagine 302 and asparagine 323 each carry an N-linked (GlcNAc...) asparagine glycan.

Belongs to the pectinesterase family. As to expression, expressed in flower buds.

The protein resides in the secreted. The protein localises to the cell wall. The catalysed reaction is [(1-&gt;4)-alpha-D-galacturonosyl methyl ester](n) + n H2O = [(1-&gt;4)-alpha-D-galacturonosyl](n) + n methanol + n H(+). It functions in the pathway glycan metabolism; pectin degradation; 2-dehydro-3-deoxy-D-gluconate from pectin: step 1/5. Its function is as follows. Acts in the modification of cell walls via demethylesterification of cell wall pectin. This is Putative pectinesterase 14 (PME14) from Arabidopsis thaliana (Mouse-ear cress).